The primary structure comprises 239 residues: Large ribosomal subunit protein uL2 (239 aa).

Residues 202–239 are disordered; that stretch reads HGGGSHQHVGRPSTVARNTPPGRKVGHIAARRTGRRKG. Residues 225 to 239 show a composition bias toward basic residues; the sequence is KVGHIAARRTGRRKG.

It belongs to the universal ribosomal protein uL2 family. In terms of assembly, part of the 50S ribosomal subunit. Forms a bridge to the 30S subunit in the 70S ribosome.

One of the primary rRNA binding proteins. Required for association of the 30S and 50S subunits to form the 70S ribosome, for tRNA binding and peptide bond formation. It has been suggested to have peptidyltransferase activity; this is somewhat controversial. Makes several contacts with the 16S rRNA in the 70S ribosome. In Desulfurococcus amylolyticus (strain DSM 18924 / JCM 16383 / VKM B-2413 / 1221n) (Desulfurococcus kamchatkensis), this protein is Large ribosomal subunit protein uL2.